A 31-amino-acid polypeptide reads, in one-letter code: Maltose/maltodextrin import ATP-binding protein MalK (31 aa).

Belongs to the ABC transporter superfamily. Maltooligosaccharide importer (TC 3.A.1.1.1) family. The complex is composed of two ATP-binding proteins (MalK), two transmembrane proteins (MalG and MalK) and a solute-binding protein (MalE).

Its subcellular location is the cell inner membrane. The catalysed reaction is D-maltose(out) + ATP + H2O = D-maltose(in) + ADP + phosphate + H(+). Functionally, part of the ABC transporter complex MalEFGK involved in maltose/maltodextrin import. Responsible for energy coupling to the transport system. In Photorhabdus luminescens (Xenorhabdus luminescens), this protein is Maltose/maltodextrin import ATP-binding protein MalK.